We begin with the raw amino-acid sequence, 123 residues long: Small ribosomal subunit protein uS12 (123 aa).

The tract at residues 1-21 (MPTIEQLVRKGRQAKPKKSKT) is disordered. Residues 9-20 (RKGRQAKPKKSK) show a composition bias toward basic residues.

Belongs to the universal ribosomal protein uS12 family. In terms of assembly, part of the 30S ribosomal subunit. Contacts proteins S8 and S17. May interact with IF1 in the 30S initiation complex.

Functionally, with S4 and S5 plays an important role in translational accuracy. Interacts with and stabilizes bases of the 16S rRNA that are involved in tRNA selection in the A site and with the mRNA backbone. Located at the interface of the 30S and 50S subunits, it traverses the body of the 30S subunit contacting proteins on the other side and probably holding the rRNA structure together. The combined cluster of proteins S8, S12 and S17 appears to hold together the shoulder and platform of the 30S subunit. The polypeptide is Small ribosomal subunit protein uS12 (Bifidobacterium longum (strain NCC 2705)).